The sequence spans 101 residues: Large ribosomal subunit protein uL23 (101 aa).

The protein belongs to the universal ribosomal protein uL23 family. As to quaternary structure, part of the 50S ribosomal subunit. Contacts protein L29, and trigger factor when it is bound to the ribosome.

In terms of biological role, one of the early assembly proteins it binds 23S rRNA. One of the proteins that surrounds the polypeptide exit tunnel on the outside of the ribosome. Forms the main docking site for trigger factor binding to the ribosome. This Pseudarthrobacter chlorophenolicus (strain ATCC 700700 / DSM 12829 / CIP 107037 / JCM 12360 / KCTC 9906 / NCIMB 13794 / A6) (Arthrobacter chlorophenolicus) protein is Large ribosomal subunit protein uL23.